Consider the following 340-residue polypeptide: Alcohol dehydrogenase (340 aa).

Zn(2+)-binding residues include Cys37, His58, Cys89, Cys92, Cys95, Cys103, and Cys145.

It belongs to the zinc-containing alcohol dehydrogenase family. Zn(2+) serves as cofactor.

It carries out the reaction a primary alcohol + NAD(+) = an aldehyde + NADH + H(+). The catalysed reaction is a secondary alcohol + NAD(+) = a ketone + NADH + H(+). The protein is Alcohol dehydrogenase (adh) of Staphylococcus epidermidis (strain ATCC 12228 / FDA PCI 1200).